Consider the following 165-residue polypeptide: MATLLFDDGREATAAEIEAIARAHRIVVEHRPVPAALAETLARPLLDDTSAATVLDALPPRPEFPSRDLIVLHPDRPDNEQLATKFENWHRHAGDEIRHILDGAGIFGVIVDGQRADLHVGPGDFIVVPAGLEHNFRLTAARRIKAVRYLSDAEGWSAEFTGRAA.

Residues H90, H92, E96, and H134 each coordinate Fe(2+). Positions 90, 92, 96, and 134 each coordinate Ni(2+).

It belongs to the acireductone dioxygenase (ARD) family. As to quaternary structure, monomer. It depends on Fe(2+) as a cofactor. The cofactor is Ni(2+).

It catalyses the reaction 1,2-dihydroxy-5-(methylsulfanyl)pent-1-en-3-one + O2 = 3-(methylsulfanyl)propanoate + CO + formate + 2 H(+). The catalysed reaction is 1,2-dihydroxy-5-(methylsulfanyl)pent-1-en-3-one + O2 = 4-methylsulfanyl-2-oxobutanoate + formate + 2 H(+). It functions in the pathway amino-acid biosynthesis; L-methionine biosynthesis via salvage pathway; L-methionine from S-methyl-5-thio-alpha-D-ribose 1-phosphate: step 5/6. Functionally, catalyzes 2 different reactions between oxygen and the acireductone 1,2-dihydroxy-3-keto-5-methylthiopentene (DHK-MTPene) depending upon the metal bound in the active site. Fe-containing acireductone dioxygenase (Fe-ARD) produces formate and 2-keto-4-methylthiobutyrate (KMTB), the alpha-ketoacid precursor of methionine in the methionine recycle pathway. Ni-containing acireductone dioxygenase (Ni-ARD) produces methylthiopropionate, carbon monoxide and formate, and does not lie on the methionine recycle pathway. The sequence is that of Acireductone dioxygenase from Rhodopseudomonas palustris (strain ATCC BAA-98 / CGA009).